Reading from the N-terminus, the 30-residue chain is Cyclotide cter-P (30 aa).

A cross-link (cyclopeptide (Gly-Asn)) is located at residues 1–30 (GIPCGESCVFIPCITAAIGCSCKSKVCYRN). 3 disulfides stabilise this stretch: cysteine 4–cysteine 20, cysteine 8–cysteine 22, and cysteine 13–cysteine 27.

This is a cyclic peptide.

The protein resides in the secreted. Its function is as follows. Probably participates in a plant defense mechanism. This chain is Cyclotide cter-P, found in Clitoria ternatea (Butterfly pea).